Consider the following 791-residue polypeptide: Subtilisin-like protease SBT5.6 (791 aa).

An N-terminal signal peptide occupies residues 1–20; sequence MKKLTSLFPLLFLIPLLASC. The propeptide at 21–108 is activation peptide; it reads AEEKQVYIVY…KSHPRKYEAH (88 aa). Residues 26 to 104 enclose the Inhibitor I9 domain; the sequence is VYIVYFGEHK…VSVFKSHPRK (79 aa). The region spanning 134–645 is the Peptidase S8 domain; sequence ADDRFRVGRN…SGHFRPTKAA (512 aa). Asp160 acts as the Charge relay system in catalysis. N-linked (GlcNAc...) asparagine glycans are attached at residues Asn193 and Asn219. His235 serves as the catalytic Charge relay system. The 95-residue stretch at 400–494 folds into the PA domain; sequence FAPLVYASNV…VTPTVVDKIL (95 aa). Asn417 carries an N-linked (GlcNAc...) asparagine glycan. The active-site Charge relay system is Ser578. N-linked (GlcNAc...) asparagine glycans are attached at residues Asn666, Asn713, and Asn761.

The protein belongs to the peptidase S8 family.

It localises to the secreted. In Arabidopsis thaliana (Mouse-ear cress), this protein is Subtilisin-like protease SBT5.6.